The following is a 1065-amino-acid chain: Presequence protease, mitochondrial (1065 aa).

A mitochondrion-targeting transit peptide spans 1–42; sequence MLRSFSGAGKCKCRIPVSRQPVCGRSLRISSTLTPWNQSRRA. Residue His117 coordinates Zn(2+). Glu120 acts as the Proton acceptor in catalysis. His121 serves as a coordination point for Zn(2+). The active site involves Glu193. Glu230 provides a ligand contact to Zn(2+).

Belongs to the peptidase M16 family. PreP subfamily. In terms of assembly, monomer and homodimer; homodimerization is induced by binding of the substrate. Zn(2+) is required as a cofactor.

The protein localises to the mitochondrion intermembrane space. It localises to the mitochondrion matrix. Functionally, degrades mitochondrial transit peptides after their cleavage in the intermembrane space or in the matrix, and presequence peptides; clearance of these peptides is required to keep the presequence processing machinery running. Preferentially cleaves the N-terminal side of paired basic amino acid residues. Also degrades other unstructured peptides. May function as an ATP-dependent peptidase as opposed to a metalloendopeptidase. The sequence is that of Presequence protease, mitochondrial (cym1) from Aspergillus fumigatus (strain ATCC MYA-4609 / CBS 101355 / FGSC A1100 / Af293) (Neosartorya fumigata).